The primary structure comprises 293 residues: Ribosomal RNA small subunit methyltransferase A (293 aa).

Positions 33, 35, 60, 81, 111, and 130 each coordinate S-adenosyl-L-methionine.

This sequence belongs to the class I-like SAM-binding methyltransferase superfamily. rRNA adenine N(6)-methyltransferase family. RsmA subfamily.

Its subcellular location is the cytoplasm. The catalysed reaction is adenosine(1518)/adenosine(1519) in 16S rRNA + 4 S-adenosyl-L-methionine = N(6)-dimethyladenosine(1518)/N(6)-dimethyladenosine(1519) in 16S rRNA + 4 S-adenosyl-L-homocysteine + 4 H(+). In terms of biological role, specifically dimethylates two adjacent adenosines (A1518 and A1519) in the loop of a conserved hairpin near the 3'-end of 16S rRNA in the 30S particle. May play a critical role in biogenesis of 30S subunits. In Corynebacterium glutamicum (strain R), this protein is Ribosomal RNA small subunit methyltransferase A.